Consider the following 409-residue polypeptide: uncharacterized protein (409 aa).

The N-acetyltransferase domain maps to 3–162 (TDVRVLRQDD…DDVRLRYAVP (160 aa)). Residues 82 to 84 (VSV), 90 to 95 (RRGVLT), and 118 to 119 (SE) each bind acetyl-CoA. Tyr123 serves as the catalytic Proton donor. The active-site Proton acceptor; via carboxylate is the Phe409.

Belongs to the acetyltransferase Eis family. Homohexamer; trimer of dimers.

This is an uncharacterized protein from Streptomyces avermitilis (strain ATCC 31267 / DSM 46492 / JCM 5070 / NBRC 14893 / NCIMB 12804 / NRRL 8165 / MA-4680).